Here is a 162-residue protein sequence, read N- to C-terminus: uncharacterized protein (162 aa).

Residues 1–23 form a disordered region; it reads MAQLPLSPAPQRPETKTPGKPEA. The segment covering 13–23 has biased composition (basic and acidic residues); that stretch reads PETKTPGKPEA.

This is an uncharacterized protein from Rhodobacter capsulatus (Rhodopseudomonas capsulata).